Consider the following 276-residue polypeptide: Small ribosomal subunit protein uS2 (276 aa).

The disordered stretch occupies residues 251 to 276; it reads AEEAPAAAEEAPAAEPAAEETPAAEA. A compositionally biased stretch (low complexity) spans 252-276; it reads EEAPAAAEEAPAAEPAAEETPAAEA.

This sequence belongs to the universal ribosomal protein uS2 family.

The sequence is that of Small ribosomal subunit protein uS2 from Jannaschia sp. (strain CCS1).